A 122-amino-acid chain; its full sequence is Large ribosomal subunit protein uL14 (122 aa).

Belongs to the universal ribosomal protein uL14 family. In terms of assembly, part of the 50S ribosomal subunit. Forms a cluster with proteins L3 and L19. In the 70S ribosome, L14 and L19 interact and together make contacts with the 16S rRNA in bridges B5 and B8.

Functionally, binds to 23S rRNA. Forms part of two intersubunit bridges in the 70S ribosome. This Anaeromyxobacter dehalogenans (strain 2CP-1 / ATCC BAA-258) protein is Large ribosomal subunit protein uL14.